The chain runs to 207 residues: Large ribosomal subunit protein uL4 (207 aa).

The disordered stretch occupies residues 49 to 78 (HAVKNRSAVRGGGRKPWRQKGTGRARQGSI). Residues 60 to 71 (GGRKPWRQKGTG) show a composition bias toward basic residues.

The protein belongs to the universal ribosomal protein uL4 family. As to quaternary structure, part of the 50S ribosomal subunit.

Its function is as follows. One of the primary rRNA binding proteins, this protein initially binds near the 5'-end of the 23S rRNA. It is important during the early stages of 50S assembly. It makes multiple contacts with different domains of the 23S rRNA in the assembled 50S subunit and ribosome. In terms of biological role, forms part of the polypeptide exit tunnel. The polypeptide is Large ribosomal subunit protein uL4 (Enterococcus faecalis (strain ATCC 700802 / V583)).